A 364-amino-acid chain; its full sequence is Carbamoyl phosphate synthase pyrimidine-specific small chain (364 aa).

Positions 1–169 are CPSase; that stretch reads MKRYLVLEDG…AYPNPATGPN (169 aa). Residues S45, G217, and G219 each contribute to the L-glutamine site. The Glutamine amidotransferase type-1 domain occupies 169–356; sequence NVVVVDFGLK…IDLMAANQAT (188 aa). The active-site Nucleophile is the C244. L-glutamine-binding residues include L245, Q248, N286, G288, and Y289. Active-site residues include H329 and D331.

Belongs to the CarA family. In terms of assembly, composed of two chains; the small (or glutamine) chain promotes the hydrolysis of glutamine to ammonia, which is used by the large (or ammonia) chain to synthesize carbamoyl phosphate. Tetramer of heterodimers (alpha,beta)4.

It catalyses the reaction hydrogencarbonate + L-glutamine + 2 ATP + H2O = carbamoyl phosphate + L-glutamate + 2 ADP + phosphate + 2 H(+). The catalysed reaction is L-glutamine + H2O = L-glutamate + NH4(+). It participates in pyrimidine metabolism; UMP biosynthesis via de novo pathway; (S)-dihydroorotate from bicarbonate: step 1/3. With respect to regulation, inhibited by pyrimidine. Functionally, small subunit of the glutamine-dependent carbamoyl phosphate synthetase (CPSase). CPSase catalyzes the formation of carbamoyl phosphate from the ammonia moiety of glutamine, carbonate, and phosphate donated by ATP, constituting the first step of the biosynthetic pathway leading to pyrimidine nucleotides. The small subunit (glutamine amidotransferase) binds and cleaves glutamine to supply the large subunit with the substrate ammonia. This Lactiplantibacillus plantarum (strain ATCC BAA-793 / NCIMB 8826 / WCFS1) (Lactobacillus plantarum) protein is Carbamoyl phosphate synthase pyrimidine-specific small chain.